The chain runs to 468 residues: Acetyl-CoA decarbonylase/synthase complex subunit gamma 1 (468 aa).

Residues 1–61 (MKINSPLEAY…YAKKLAELDR (61 aa)) enclose the 4Fe-4S domain. [4Fe-4S] cluster contacts are provided by Cys18, Cys21, Cys26, and Cys43.

In terms of assembly, heterodimer of delta and gamma chains. The ACDS complex is made up of alpha, epsilon, beta, gamma and delta chains with a probable stoichiometry of (alpha(2)epsilon(2))(4)-beta(8)-(gamma(1)delta(1))(8). Corrinoid serves as cofactor. It depends on [4Fe-4S] cluster as a cofactor.

The enzyme catalyses 5,6,7,8-tetrahydrosarcinapterin + methyl-Co(III)-[corrinoid Fe-S protein] = 5-methyltetrahydrosarcinapterin + Co(I)-[corrinoid Fe-S protein] + H(+). The protein operates within one-carbon metabolism; methanogenesis from acetate. Part of a complex that catalyzes the reversible cleavage of acetyl-CoA, allowing growth on acetate as sole source of carbon and energy. The protein is Acetyl-CoA decarbonylase/synthase complex subunit gamma 1 of Methanosarcina thermophila.